A 477-amino-acid chain; its full sequence is Transmembrane and coiled-coil domain protein 3 (477 aa).

Ser46 is subject to Phosphoserine. Residues 112-153 (KQVFEKKNQKSAHSIAQLQKKLEQYHRKLREIEQNGASRSSK) adopt a coiled-coil conformation. 2 disordered regions span residues 168–188 (KDAH…KSGM) and 249–277 (PKYG…GAGG). Ser253 carries the phosphoserine modification. Residues 258-273 (SSGTSGSADSNGNQSF) show a composition bias toward polar residues. Residues 282-398 (DSQGKLAVIL…KLELHQQEQQ (117 aa)) are a coiled coil. 2 helical membrane passes run 417–437 (VILA…KFVS) and 450–470 (FFAV…LCAI).

The protein belongs to the TEX28 family. As to quaternary structure, may form homodimers and heterodimers with TMCC2 or TMCC3 via the coiled-coil domains. Interacts with ribosomal proteins RPL4 and RPS6. Widely expressed, with highest levels in brain, spinal cord and testis.

It is found in the endoplasmic reticulum membrane. The sequence is that of Transmembrane and coiled-coil domain protein 3 from Homo sapiens (Human).